Here is a 392-residue protein sequence, read N- to C-terminus: 5-amino-6-(D-ribitylamino)uracil--L-tyrosine 4-hydroxyphenyl transferase (392 aa).

Residues valine 60 to lysine 307 form the Radical SAM core domain. [4Fe-4S] cluster contacts are provided by cysteine 74, cysteine 78, and cysteine 81.

It belongs to the radical SAM superfamily. CofH family. In terms of assembly, consists of two subunits, CofG and CofH. The cofactor is [4Fe-4S] cluster.

The catalysed reaction is 5-amino-6-(D-ribitylamino)uracil + L-tyrosine + S-adenosyl-L-methionine = 5-amino-5-(4-hydroxybenzyl)-6-(D-ribitylimino)-5,6-dihydrouracil + 2-iminoacetate + 5'-deoxyadenosine + L-methionine + H(+). It functions in the pathway cofactor biosynthesis; coenzyme F0 biosynthesis. Its function is as follows. Catalyzes the radical-mediated synthesis of 5-amino-5-(4-hydroxybenzyl)-6-(D-ribitylimino)-5,6-dihydrouracil from 5-amino-6-(D-ribitylamino)uracil and L-tyrosine. The polypeptide is 5-amino-6-(D-ribitylamino)uracil--L-tyrosine 4-hydroxyphenyl transferase (Synechocystis sp. (strain ATCC 27184 / PCC 6803 / Kazusa)).